The sequence spans 308 residues: 50 kDa gamma-zein (308 aa).

The N-terminal stretch at 1–19 is a signal peptide; sequence MKLVLVVLAFIALVSSVSC. Residues 27–159 form a disordered region; sequence CGQQQSHEQQ…QPQQPQQYQQ (133 aa). Positions 55–119 are enriched in low complexity; it reads HHQQQQHQQQ…QHHQQSQGHV (65 aa). Residues 120–129 show a composition bias toward basic and acidic residues; the sequence is QQHEQSHEQH. Over residues 130 to 159 the composition is skewed to low complexity; it reads QGQSHEQQHQQQFQGHDKQQQPQQPQQYQQ. Residue Cys286 is the site of GPI-anchor amidated cysteine attachment. A propeptide spans 287–308 (removed in mature form); it reads GLYHSYYQNNPCSSNDISGVCN.

It belongs to the gliadin/glutenin family. As to quaternary structure, interacts with OP10 (via N-terminus).

Its subcellular location is the cell membrane. In terms of biological role, zeins are major seed storage proteins. This is 50 kDa gamma-zein from Zea mays (Maize).